The chain runs to 195 residues: MKIGVLALQGAFREHINMLRTLGAEAVEVRKAEELAELSGLIIPGGESTTITKLLYTFGLAKPVKDLARNGMPVWGTCAGMICLAKELSGDISGVKTLELMDITVRRNAFGRQVDSFEAMLKVKALEGGDFPAVFIRAPLVEKTGQWVEVLAKLPDGTMVAVRENNLLATSFHPELSADNRFHRYFVQMAKDYKP.

Position 46-48 (46-48 (GES)) interacts with L-glutamine. Cysteine 78 serves as the catalytic Nucleophile. L-glutamine-binding positions include arginine 107 and 136–137 (IR). Catalysis depends on charge relay system residues histidine 173 and glutamate 175.

The protein belongs to the glutaminase PdxT/SNO family. As to quaternary structure, in the presence of PdxS, forms a dodecamer of heterodimers. Only shows activity in the heterodimer.

It carries out the reaction aldehydo-D-ribose 5-phosphate + D-glyceraldehyde 3-phosphate + L-glutamine = pyridoxal 5'-phosphate + L-glutamate + phosphate + 3 H2O + H(+). The catalysed reaction is L-glutamine + H2O = L-glutamate + NH4(+). The protein operates within cofactor biosynthesis; pyridoxal 5'-phosphate biosynthesis. Functionally, catalyzes the hydrolysis of glutamine to glutamate and ammonia as part of the biosynthesis of pyridoxal 5'-phosphate. The resulting ammonia molecule is channeled to the active site of PdxS. This Dehalococcoides mccartyi (strain ATCC BAA-2266 / KCTC 15142 / 195) (Dehalococcoides ethenogenes (strain 195)) protein is Pyridoxal 5'-phosphate synthase subunit PdxT.